We begin with the raw amino-acid sequence, 71 residues long: Beta-defensin 2 (71 aa).

The first 20 residues, Met1–Pro20, serve as a signal peptide directing secretion. Cystine bridges form between Cys37/Cys66, Cys44/Cys59, and Cys49/Cys67.

Belongs to the beta-defensin family. In terms of tissue distribution, kidney, uterus and to a lesser extent in heart.

Its subcellular location is the secreted. In terms of biological role, has bactericidal activity. The chain is Beta-defensin 2 (Defb2) from Mus musculus (Mouse).